A 200-amino-acid chain; its full sequence is Formate dehydrogenase iron-sulfur subunit (200 aa).

3 consecutive 4Fe-4S ferredoxin-type domains span residues 7-37 (VKFY…VGVN), 50-81 (GKEK…VRAD), and 82-111 (GIVL…FPKS). 16 residues coordinate [4Fe-4S] cluster: Cys-16, Cys-19, Cys-22, Cys-26, Cys-59, Cys-62, Cys-67, Cys-71, Cys-91, Cys-94, Cys-97, Cys-101, Cys-123, Cys-126, Cys-155, and Cys-159.

As to quaternary structure, formate dehydrogenase is a membrane-bound complex, formed of at least three different subunits. It depends on [4Fe-4S] cluster as a cofactor.

Its function is as follows. This chain is an electron transfer unit containing 18 cysteine residues, 16 of which occur in four clusters. The protein is Formate dehydrogenase iron-sulfur subunit (fdhB1) of Wolinella succinogenes (strain ATCC 29543 / DSM 1740 / CCUG 13145 / JCM 31913 / LMG 7466 / NCTC 11488 / FDC 602W) (Vibrio succinogenes).